The following is a 183-amino-acid chain: ATP synthase subunit delta (183 aa).

The protein belongs to the ATPase delta chain family. As to quaternary structure, F-type ATPases have 2 components, F(1) - the catalytic core - and F(0) - the membrane proton channel. F(1) has five subunits: alpha(3), beta(3), gamma(1), delta(1), epsilon(1). F(0) has three main subunits: a(1), b(2) and c(10-14). The alpha and beta chains form an alternating ring which encloses part of the gamma chain. F(1) is attached to F(0) by a central stalk formed by the gamma and epsilon chains, while a peripheral stalk is formed by the delta and b chains.

It localises to the cell inner membrane. Functionally, f(1)F(0) ATP synthase produces ATP from ADP in the presence of a proton or sodium gradient. F-type ATPases consist of two structural domains, F(1) containing the extramembraneous catalytic core and F(0) containing the membrane proton channel, linked together by a central stalk and a peripheral stalk. During catalysis, ATP synthesis in the catalytic domain of F(1) is coupled via a rotary mechanism of the central stalk subunits to proton translocation. This protein is part of the stalk that links CF(0) to CF(1). It either transmits conformational changes from CF(0) to CF(1) or is implicated in proton conduction. The protein is ATP synthase subunit delta of Verminephrobacter eiseniae (strain EF01-2).